Here is a 150-residue protein sequence, read N- to C-terminus: Putative esterase SSO1253 (150 aa).

Belongs to the thioesterase PaaI family.

The sequence is that of Putative esterase SSO1253 from Saccharolobus solfataricus (strain ATCC 35092 / DSM 1617 / JCM 11322 / P2) (Sulfolobus solfataricus).